We begin with the raw amino-acid sequence, 417 residues long: Probable phosphoglycerate kinase (417 aa).

Valine 23, aspartate 24, phenylalanine 25, asparagine 26, glutamine 38, arginine 39, serine 62, histidine 63, glycine 65, arginine 66, leucine 121, arginine 122, histidine 169, and arginine 170 together coordinate (2R)-3-phosphoglycerate. Glycine 213 contacts ADP. Glycine 213 lines the CDP pocket. Positions 214 and 215 each coordinate AMP. Alanine 214 provides a ligand contact to ATP. Alanine 214 lines the Mg(2+) pocket. Residues alanine 217 and aspartate 218 each coordinate Mg(2+). Aspartate 218 is a binding site for CDP. Lysine 219 contacts AMP. Lysine 219 contributes to the ATP binding site. Glycine 237 serves as a coordination point for ADP. A CDP-binding site is contributed by glycine 237. AMP contacts are provided by glycine 238 and glycine 312. ATP is bound by residues glycine 238 and glycine 312. Glycine 337, alanine 339, and phenylalanine 342 together coordinate CDP. Residue phenylalanine 342 participates in ADP binding. Glutamate 343 is a binding site for AMP. ATP contacts are provided by glutamate 343, aspartate 374, and threonine 375. Mg(2+) is bound at residue aspartate 374.

This sequence belongs to the phosphoglycerate kinase family. Monomer. Mg(2+) serves as cofactor.

The protein localises to the cytoplasm. The catalysed reaction is (2R)-3-phosphoglycerate + ATP = (2R)-3-phospho-glyceroyl phosphate + ADP. It participates in carbohydrate degradation; glycolysis; pyruvate from D-glyceraldehyde 3-phosphate: step 2/5. The chain is Probable phosphoglycerate kinase (pgk-1) from Caenorhabditis elegans.